A 208-amino-acid chain; its full sequence is Putative ADP-ribose pyrophosphatase YjhB (208 aa).

One can recognise a Nudix hydrolase domain in the interval 69 to 195 (TPKADVRGAV…NTPSQLSMLF (127 aa)). Positions 100–121 (GFCEIGLSPAENVVKEIKEESG) match the Nudix box motif. Glu-115 and Glu-119 together coordinate Mg(2+).

Belongs to the Nudix hydrolase family. Requires Mg(2+) as cofactor. Mn(2+) is required as a cofactor.

Functionally, probably mediates the hydrolysis of some nucleoside diphosphate derivatives. This Bacillus subtilis (strain 168) protein is Putative ADP-ribose pyrophosphatase YjhB (yjhB).